Reading from the N-terminus, the 214-residue chain is Pyrrolidone-carboxylate peptidase (214 aa).

Residues Glu80, Cys143, and His166 contribute to the active site.

This sequence belongs to the peptidase C15 family. In terms of assembly, homotetramer.

The protein resides in the cytoplasm. The catalysed reaction is Release of an N-terminal pyroglutamyl group from a polypeptide, the second amino acid generally not being Pro.. Its function is as follows. Removes 5-oxoproline from various penultimate amino acid residues except L-proline. The sequence is that of Pyrrolidone-carboxylate peptidase from Enterobacter sp. (strain 638).